Reading from the N-terminus, the 333-residue chain is Arylacetonitrilase (333 aa).

The region spanning 9-284 (VRVAVTQAEP…EGIIYADLEM (276 aa)) is the CN hydrolase domain. The active-site Proton acceptor is the Glu-49. The active site involves Lys-129. Cys-164 functions as the Nucleophile in the catalytic mechanism.

Belongs to the carbon-nitrogen hydrolase superfamily. Nitrilase family.

It carries out the reaction a nitrile + 2 H2O = a carboxylate + NH4(+). The catalysed reaction is 4-chlorophenylacetonitrile + 2 H2O = 4-chlorophenylacetate + NH4(+). Functionally, nitrilase that hydrolyzes preferentially phenylacetonitrile, (R,S)-mandelonitrile, and 3-indolylacetonitrile. The protein is Arylacetonitrilase of Aspergillus oryzae (strain ATCC 42149 / RIB 40) (Yellow koji mold).